The chain runs to 285 residues: UstYa family oxidase phomYe (285 aa).

Residues 32–54 (LFYGWKGIAFLSTLTNVLFISGF) traverse the membrane as a helical segment. Positions 143 to 165 (YGFGTPLTGPGSEGNEHDPTPWT) are disordered. Residues 177-181 (HQLHC) carry the HXXHC 1 motif. Asn-202 carries N-linked (GlcNAc...) asparagine glycosylation. Residues 209–213 (HVDHC) carry the HXXHC 2 motif.

It belongs to the ustYa family.

The protein localises to the membrane. It functions in the pathway mycotoxin biosynthesis. Functionally, ustYa family oxidase; part of the gene cluster that mediates the biosynthesis of the phomopsins, a group of hexapeptide mycotoxins which infects lupins and causes lupinosis disease in livestock. Within the pathway, phomYe catalyzes the desaturation of the Pro moiety into 3,4-dehydroproline (dPro). The pathway starts with the processing of the precursor phomA by several endopeptidases including kexin proteases as well as the cluster-specific S41 family peptidase phomP1 and the oligopeptidase phomG to produce 10 identical copies of the hexapeptide Tyr-Val-Ile-Pro-Ile-Asp. After being excised from the precursor peptide, the core peptides are cyclized and modified post-translationally by enzymes encoded within the gene cluster. The timing and order of proteolysis of the phomA precursor and PTMs are still unknown. Two tyrosinase-like enzymes, phomQ1 and phomQ2, catalyze the chlorination and hydroxylation of Tyr, respectively. PhomYb, is proposed to be involved in the construction of the macrocyclic structure. The other 4 ustYa family proteins may be involved in PTMs that generate the unique structure of phomopsin A. PhomYa is required for the hydroxylation of C-beta of Tyr. PhomYc, phomYd, and phomYe are responsible for the biosynthesis of 2,3-dehydroisoleucine (dIle), 2,3-dehydroaspartic acid (dAsp), and 3,4-dehydroproline (dPro), respectively. While dIle formation by phomYc is indispensable for the installation of dAsp by phomYd, the order of the other PTMs have not been elucidated yet. Most of the biosynthetic enzymes likely have broad substrate specificity, and thus, there might be a metabolic grid from a precursor to phomopsin A. The enzyme(s) responsible for the biosynthesis of 3,4-dehydrovaline (dVal) have also not been identified yet. Finally, phomM acts as an S-adenosylmethionine-dependent alpha-N-methyltransferase that catalyzes two successive N-methylation reactions, converting N-desmethyl-phomopsin A to phomopsin A and phomopsin A further to an N,N-dimethylated congener called phomopsin E. This chain is UstYa family oxidase phomYe, found in Diaporthe leptostromiformis (Lupinosis disease fungus).